We begin with the raw amino-acid sequence, 153 residues long: Ribosome maturation factor RimP (153 aa).

The protein belongs to the RimP family.

It is found in the cytoplasm. Functionally, required for maturation of 30S ribosomal subunits. This Christiangramia forsetii (strain DSM 17595 / CGMCC 1.15422 / KT0803) (Gramella forsetii) protein is Ribosome maturation factor RimP.